Reading from the N-terminus, the 222-residue chain is Large ribosomal subunit protein uL11c (222 aa).

The segment at 1-20 (MASSSLSTLCSSTSSSLHPN) is disordered. The transit peptide at 1 to 62 (MASSSLSTLC…TPRFLTVIAM (62 aa)) directs the protein to the chloroplast.

The protein belongs to the universal ribosomal protein uL11 family. In terms of assembly, part of the ribosomal stalk of the 50S ribosomal subunit. Interacts with L10 and the large rRNA to form the base of the stalk. L10 forms an elongated spine to which L12 dimers bind in a sequential fashion forming a multimeric L10(L12)X complex.

It localises to the plastid. It is found in the chloroplast. Its function is as follows. Forms part of the ribosomal stalk which helps the ribosome interact with GTP-bound translation factors. This is Large ribosomal subunit protein uL11c (RPL11) from Arabidopsis thaliana (Mouse-ear cress).